We begin with the raw amino-acid sequence, 439 residues long: Tol-Pal system protein TolB (439 aa).

The signal sequence occupies residues 1–24 (MRNGMRKIIAGVFIFVFLISNLYA).

The protein belongs to the TolB family. The Tol-Pal system is composed of five core proteins: the inner membrane proteins TolA, TolQ and TolR, the periplasmic protein TolB and the outer membrane protein Pal. They form a network linking the inner and outer membranes and the peptidoglycan layer.

It localises to the periplasm. Its function is as follows. Part of the Tol-Pal system, which plays a role in outer membrane invagination during cell division and is important for maintaining outer membrane integrity. The sequence is that of Tol-Pal system protein TolB from Francisella tularensis subsp. tularensis (strain FSC 198).